Consider the following 105-residue polypeptide: Large ribosomal subunit protein uL24 (105 aa).

Belongs to the universal ribosomal protein uL24 family. As to quaternary structure, part of the 50S ribosomal subunit.

Its function is as follows. One of two assembly initiator proteins, it binds directly to the 5'-end of the 23S rRNA, where it nucleates assembly of the 50S subunit. One of the proteins that surrounds the polypeptide exit tunnel on the outside of the subunit. This Mycobacterium sp. (strain JLS) protein is Large ribosomal subunit protein uL24.